A 212-amino-acid chain; its full sequence is Peptide methionine sulfoxide reductase MsrA (212 aa).

C52 is an active-site residue.

This sequence belongs to the MsrA Met sulfoxide reductase family.

The catalysed reaction is L-methionyl-[protein] + [thioredoxin]-disulfide + H2O = L-methionyl-(S)-S-oxide-[protein] + [thioredoxin]-dithiol. It catalyses the reaction [thioredoxin]-disulfide + L-methionine + H2O = L-methionine (S)-S-oxide + [thioredoxin]-dithiol. In terms of biological role, has an important function as a repair enzyme for proteins that have been inactivated by oxidation. Catalyzes the reversible oxidation-reduction of methionine sulfoxide in proteins to methionine. The protein is Peptide methionine sulfoxide reductase MsrA of Escherichia coli O127:H6 (strain E2348/69 / EPEC).